The following is a 91-amino-acid chain: Small ribosomal subunit protein uS15 (91 aa).

This sequence belongs to the universal ribosomal protein uS15 family. As to quaternary structure, part of the 30S ribosomal subunit. Forms a bridge to the 50S subunit in the 70S ribosome, contacting the 23S rRNA.

Functionally, one of the primary rRNA binding proteins, it binds directly to 16S rRNA where it helps nucleate assembly of the platform of the 30S subunit by binding and bridging several RNA helices of the 16S rRNA. Forms an intersubunit bridge (bridge B4) with the 23S rRNA of the 50S subunit in the ribosome. This is Small ribosomal subunit protein uS15 from Synechococcus sp. (strain JA-3-3Ab) (Cyanobacteria bacterium Yellowstone A-Prime).